Reading from the N-terminus, the 118-residue chain is Large ribosomal subunit protein bL20 (118 aa).

Belongs to the bacterial ribosomal protein bL20 family.

Binds directly to 23S ribosomal RNA and is necessary for the in vitro assembly process of the 50S ribosomal subunit. It is not involved in the protein synthesizing functions of that subunit. The protein is Large ribosomal subunit protein bL20 of Syntrophotalea carbinolica (strain DSM 2380 / NBRC 103641 / GraBd1) (Pelobacter carbinolicus).